A 1306-amino-acid polypeptide reads, in one-letter code: Angiotensin-converting enzyme (1306 aa).

A signal peptide spans 1–29 (MGAASGRRGPGLLLPLPLLLLLPPQPALA). The Extracellular segment spans residues 30–1256 (LDPGLQPGNF…GLDLDAQQAR (1227 aa)). N38, N54, N74, E103, N111, I121, Y140, N146, and N160 each carry an N-linked (GlcNAc...) asparagine glycan. 2 consecutive Peptidase M2 domains span residues 40–624 (SADE…LGWP) and 643–1222 (VTDE…LGWP). A disulfide bridge connects residues C157 and C165. Y231 lines the chloride pocket. 2 N-linked (GlcNAc...) asparagine glycosylation sites follow: N318 and N368. The cysteines at positions 359 and 377 are disulfide-linked. H390 contacts Zn(2+). E391 functions as the Proton acceptor 1 in the catalytic mechanism. Residues H394, P414, E418, and R442 each coordinate Zn(2+). N445 and N509 each carry an N-linked (GlcNAc...) asparagine glycan. The active-site Proton donor 1 is the H520. R529 serves as a coordination point for chloride. C545 and C557 are disulfide-bonded. N-linked (GlcNAc...) asparagine glycans are attached at residues N617 and N677. N695 and N714 each carry an N-linked (GlcNAc...) (complex) asparagine glycan. A disulfide bridge links C757 with C763. N760 is a glycosylation site (N-linked (GlcNAc...) asparagine; partial). Residues R791 and Y829 each coordinate chloride. N942 carries an N-linked (GlcNAc...) asparagine; partial glycan. A disulfide bridge links C957 with C975. H988 is a Zn(2+) binding site. Residue E989 is the Proton acceptor 2 of the active site. Zn(2+) contacts are provided by H992 and E1016. Chloride contacts are provided by W1090 and R1094. The active-site Proton donor 2 is H1118. R1127 contributes to the chloride binding site. The cysteines at positions 1143 and 1155 are disulfide-linked. A glycan (N-linked (GlcNAc...) asparagine; partial) is linked at N1191. Residues 1215–1256 (HGEKLGWPQYNWTPNSARSEGPLPDSGRVSFLGLDLDAQQAR) form a juxtamembrane stalk region. The chain crosses the membrane as a helical span at residues 1257-1277 (VGQWLLLFLGIALLVATLGLS). Residues 1278 to 1306 (QRLFSIRHRSLHRHSHGPQFGSEVELRHS) lie on the Cytoplasmic side of the membrane. S1299 carries the phosphoserine modification.

Belongs to the peptidase M2 family. As to quaternary structure, monomer and homodimer; homodimerizes following binding to an inhibitor. Interacts with calmodulin (CALM1, CALM2 or CALM3); interaction takes place in the cytoplasmic region and regulates phosphorylation and proteolytic cleavage. Requires Zn(2+) as cofactor. It depends on chloride as a cofactor. Post-translationally, produced following proteolytic cleavage by secretase enzymes that cleave the transmembrane form in the juxtamembrane stalk region upstream of the transmembrane region. Cleavage can take place at different sites of the juxtamembrane stalk region. Phosphorylated by CK2 on Ser-1299; which allows membrane retention. Phosphorylated on tyrosine residues on its extracellular part, promoting cleavage by secretase enzymes and formation of the soluble form (Angiotensin-converting enzyme, soluble form). As to expression, ubiquitously expressed, with highest levels in lung, kidney, heart, gastrointestinal system and prostate. In terms of tissue distribution, specifically expressed in spermatocytes and adult testis.

Its subcellular location is the cell membrane. It localises to the cytoplasm. The protein localises to the secreted. It catalyses the reaction Release of a C-terminal dipeptide, oligopeptide-|-Xaa-Yaa, when Xaa is not Pro, and Yaa is neither Asp nor Glu. Thus, conversion of angiotensin I to angiotensin II, with increase in vasoconstrictor activity, but no action on angiotensin II.. It carries out the reaction angiotensin I + H2O = L-histidyl-L-leucine + angiotensin II. The enzyme catalyses bradykinin + H2O = L-Phe-L-Arg + bradykinin(1-7). The catalysed reaction is substance P + H2O = substance P(1-9) + L-Leu-L-Met-NH2. It catalyses the reaction substance P + H2O = substance P(1-8) + Gly-L-Leu-L-Met-NH2. It carries out the reaction substance P + H2O = L-Phe-L-Phe-Gly-L-Leu-L-Met-NH2 + substance P(1-6). The enzyme catalyses neurotensin + H2O = neurotensin(1-11) + L-isoleucyl-L-leucine. The catalysed reaction is goralatide + H2O = N-acetyl-L-seryl-L-aspartate + L-lysyl-L-proline. It catalyses the reaction Met-enkephalin + H2O = L-phenylalanyl-L-methionine + L-tyrosylglycylglycine. It carries out the reaction Leu-enkephalin + H2O = L-tyrosylglycylglycine + L-phenylalanyl-L-leucine. The enzyme catalyses Met-enkephalin-Arg-Phe + H2O = L-arginyl-L-phenylalanine + Met-enkephalin. With respect to regulation, the dipeptidyl carboxypeptidase activity is strongly activated by chloride. The dipeptidyl carboxypeptidase activity is specifically inhibited by lisinopril, captopril and enalaprilat. Its activity is regulated as follows. Strongly inhibited by lisinopril and captopril. Dipeptidyl carboxypeptidase that removes dipeptides from the C-terminus of a variety of circulating hormones, such as angiotensin I, bradykinin or enkephalins, thereby playing a key role in the regulation of blood pressure, electrolyte homeostasis or synaptic plasticity. Composed of two similar catalytic domains, each possessing a functional active site, with different selectivity for substrates. Plays a major role in the angiotensin-renin system that regulates blood pressure and sodium retention by the kidney by converting angiotensin I to angiotensin II, resulting in an increase of the vasoconstrictor activity of angiotensin. Also able to inactivate bradykinin, a potent vasodilator, and therefore enhance the blood pressure response. Acts as a regulator of synaptic transmission by mediating cleavage of neuropeptide hormones, such as substance P, neurotensin or enkephalins. Catalyzes degradation of different enkephalin neuropeptides (Met-enkephalin, Leu-enkephalin, Met-enkephalin-Arg-Phe and possibly Met-enkephalin-Arg-Gly-Leu). Acts as a regulator of synaptic plasticity in the nucleus accumbens of the brain by mediating cleavage of Met-enkephalin-Arg-Phe, a strong ligand of Mu-type opioid receptor OPRM1, into Met-enkephalin. Met-enkephalin-Arg-Phe cleavage by ACE decreases activation of OPRM1, leading to long-term synaptic potentiation of glutamate release. Also acts as a regulator of hematopoietic stem cell differentiation by mediating degradation of hemoregulatory peptide N-acetyl-SDKP (AcSDKP). Acts as a regulator of cannabinoid signaling pathway by mediating degradation of hemopressin, an antagonist peptide of the cannabinoid receptor CNR1. Involved in amyloid-beta metabolism by catalyzing degradation of Amyloid-beta protein 40 and Amyloid-beta protein 42 peptides, thereby preventing plaque formation. Catalyzes cleavage of cholecystokinin (maturation of Cholecystokinin-8 and Cholecystokinin-5) and Gonadoliberin-1 (both maturation and degradation) hormones. Degradation of hemoregulatory peptide N-acetyl-SDKP (AcSDKP) and amyloid-beta proteins is mediated by the N-terminal catalytic domain, while angiotensin I and cholecystokinin cleavage is mediated by the C-terminal catalytic region. Its function is as follows. Soluble form that is released in blood plasma and other body fluids following proteolytic cleavage in the juxtamembrane stalk region. Functionally, isoform produced by alternative promoter usage that is specifically expressed in spermatocytes and adult testis, and which is required for male fertility. In contrast to somatic isoforms, only contains one catalytic domain. Acts as a dipeptidyl carboxypeptidase that removes dipeptides from the C-terminus of substrates. The identity of substrates that are needed for male fertility is unknown. May also have a glycosidase activity which releases GPI-anchored proteins from the membrane by cleaving the mannose linkage in the GPI moiety. The GPIase activity was reported to be essential for the egg-binding ability of the sperm. This activity is however unclear and has been challenged by other groups, suggesting that it may be indirect. In Homo sapiens (Human), this protein is Angiotensin-converting enzyme.